A 363-amino-acid chain; its full sequence is Adenosine 3'-phospho 5'-phosphosulfate transporter 2 (363 aa).

Helical transmembrane passes span 39 to 59 (WLQF…YGYM), 63 to 83 (IFKL…QFVI), 106 to 126 (IYGV…ASVG), 131 to 151 (PTQV…GILI), 157 to 177 (GWID…FTLA), 187 to 206 (SRGY…IGNI), 231 to 251 (VFIF…PFFL), 257 to 277 (TFGY…VVLT), 281 to 301 (VFGA…TIIL), and 310 to 330 (FTIE…LNLY).

The protein belongs to the nucleotide-sugar transporter family. SLC35B subfamily.

It localises to the golgi apparatus membrane. Its function is as follows. Mediates the transport of adenosine 3'-phospho 5'-phosphosulfate (PAPS), from cytosol into Golgi. PAPS is a universal sulfuryl donor for sulfation events that take place in the Golgi. This is Adenosine 3'-phospho 5'-phosphosulfate transporter 2 (pst-2) from Caenorhabditis briggsae.